The chain runs to 362 residues: Mitochondrial distribution and morphology protein 12 (362 aa).

Residues 1 to 361 (MSFDINWSQL…WPSWLCFDMS (361 aa)) form the SMP-LTD domain. 2 disordered regions span residues 65–141 (DFYE…AATP) and 170–207 (TPSG…SKRG). Polar residues-rich tracts occupy residues 106-119 (VTLS…TQFA) and 170-187 (TPSG…MRTG). Positions 192–201 (PISNTPISSS) are enriched in low complexity.

This sequence belongs to the MDM12 family. Component of the ER-mitochondria encounter structure (ERMES) or MDM complex, composed of MMM1, MDM10, MDM12 and MDM34. An MMM1 homodimer associates with one molecule of MDM12 on each side in a pairwise head-to-tail manner, and the SMP-LTD domains of MMM1 and MDM12 generate a continuous hydrophobic tunnel for phospholipid trafficking.

The protein localises to the mitochondrion outer membrane. It is found in the endoplasmic reticulum membrane. Functionally, component of the ERMES/MDM complex, which serves as a molecular tether to connect the endoplasmic reticulum (ER) and mitochondria. Components of this complex are involved in the control of mitochondrial shape and protein biogenesis, and function in nonvesicular lipid trafficking between the ER and mitochondria. MDM12 is required for the interaction of the ER-resident membrane protein MMM1 and the outer mitochondrial membrane-resident beta-barrel protein MDM10. The MDM12-MMM1 subcomplex functions in the major beta-barrel assembly pathway that is responsible for biogenesis of all mitochondrial outer membrane beta-barrel proteins, and acts in a late step after the SAM complex. The MDM10-MDM12-MMM1 subcomplex further acts in the TOM40-specific pathway after the action of the MDM12-MMM1 complex. Essential for establishing and maintaining the structure of mitochondria and maintenance of mtDNA nucleoids. The chain is Mitochondrial distribution and morphology protein 12 from Meyerozyma guilliermondii (strain ATCC 6260 / CBS 566 / DSM 6381 / JCM 1539 / NBRC 10279 / NRRL Y-324) (Yeast).